Consider the following 664-residue polypeptide: MTIRILPARLANQIAAGEVVERPASVVKELVENSLDSGATKIDIDIEKGGAKLIRIRDNGSGIVKDELGLALSRHATSKIHTLDDLEAIMSLGFRGEALASISSVSRLTLTSRPATQEQAWSAYTEGRDMQVKLQPTAHPIGTTVEVVDLFFNTPARRKFLRTEKTEFAHIDELLKRIALSCFDVSITLRHNGKVIRQYRAAHNDLQAEKRLATVCGQAFVRCMLKIELEHQGLKLHGWITTPEGARQQSDLQYCYVNGRMMRDKLINHAIRQSYETSLKPEQFAAYVLFIELDPHQVDVNVHPAKHEVRFHQARLVHDFIYQALASALAQSDSIEQPQINESAFHYQAEPEVAPQGSFPAESNEVPQAVYHAIEKAPAYPRKAGQEQQLQPVAPLESSFSSEQGREVSPAPHNERKAWMESRSPARHTTSSNQSERYGEPAPSKQQVKAYAELLHTPDFPSQNVECHPSPSIASPVQELGKAVSVVAQRYLLTTTKAGCQLISLARAEFYRTLGQLNGDKAPLKSQPLLVPLSLKLEKGLVHAAQEHQDRFARMGILFKMRNEKALMVMGVPAPLRQQNLQLLIPDLLSYAASQAQKEELAQNDTAMAQWLALRVAKVKSHYTLSEAIQIISELEQLWQEKLPLQDSQLVTSVDFSATIAQLT.

The segment at Arg382–Gln447 is disordered. Over residues Arg427–Glu436 the composition is skewed to polar residues.

The protein belongs to the DNA mismatch repair MutL/HexB family.

In terms of biological role, this protein is involved in the repair of mismatches in DNA. It is required for dam-dependent methyl-directed DNA mismatch repair. May act as a 'molecular matchmaker', a protein that promotes the formation of a stable complex between two or more DNA-binding proteins in an ATP-dependent manner without itself being part of a final effector complex. The protein is DNA mismatch repair protein MutL of Vibrio vulnificus (strain CMCP6).